The primary structure comprises 510 residues: Arginine biosynthesis bifunctional protein ArgJ, chloroplastic (510 aa).

5 residues coordinate substrate: threonine 223, lysine 249, glutamate 359, asparagine 505, and threonine 510.

It belongs to the ArgJ family. Heterodimer of an alpha and a beta chain.

Its subcellular location is the plastid. It is found in the chloroplast. The enzyme catalyses N(2)-acetyl-L-ornithine + L-glutamate = N-acetyl-L-glutamate + L-ornithine. It carries out the reaction L-glutamate + acetyl-CoA = N-acetyl-L-glutamate + CoA + H(+). The protein operates within amino-acid biosynthesis; L-arginine biosynthesis; L-ornithine and N-acetyl-L-glutamate from L-glutamate and N(2)-acetyl-L-ornithine (cyclic): step 1/1. It participates in amino-acid biosynthesis; L-arginine biosynthesis; N(2)-acetyl-L-ornithine from L-glutamate: step 1/4. In terms of biological role, catalyzes two activities which are involved in the cyclic version of arginine biosynthesis: the synthesis of acetylglutamate from glutamate and acetyl-CoA, and of ornithine by transacetylation between acetylornithine and glutamate. The sequence is that of Arginine biosynthesis bifunctional protein ArgJ, chloroplastic from Vitis vinifera (Grape).